The following is a 306-amino-acid chain: Follistatin-related protein 1 (306 aa).

An N-terminal signal peptide occupies residues 1–18; it reads MWKRWLALALVTIALVHG. Positions 28–51 constitute a Follistatin-like domain; it reads ICANVFCGAGRECAVTEKGEPTCL. 5 disulfide bridges follow: Cys-29/Cys-40, Cys-34/Cys-50, Cys-52/Cys-82, Cys-56/Cys-75, and Cys-64/Cys-96. In terms of domain architecture, Kazal-like spans 46–98; sequence GEPTCLCIEQCKPHKRPVCGSNGKTYLNHCELHRDACLTGSKIQVDYDGHCKE. N-linked (GlcNAc...) asparagine glycosylation occurs at Asn-142. The EF-hand 1 domain occupies 142 to 176; it reads NYSEILDKYFKSFDNGDSHLDSSEFLKFVEQNETA. Ser-163 is subject to Phosphoserine. Asn-173 and Asn-178 each carry an N-linked (GlcNAc...) asparagine glycan. Residues 191 to 226 enclose the EF-hand 2 domain; that stretch reads LRGLCVDALIELSDENADWKLSFQEFLKCLNPSFNP. Residues 231–285 form the VWFC domain; that stretch reads CALEDETYADGAETEVDCNRCVCSCGHWVCTAMTCDGKNQKGVQTHTEEEMTRYA.

Homodimer. Interacts with SCN10A. Interacts with DIP2A; DIP2A may act as a cell surface receptor for FSTL1. Interacts with BMP4. Interacts with CD14; this interaction promotes TL4-mediated signaling cascade.

The protein localises to the secreted. In terms of biological role, secreted glycoprotein that is involved in various physiological processes, such as angiogenesis, regulation of the immune response, cell proliferation and differentiation. Plays a role in the development of the central nervous system, skeletal system, lungs, and ureter. Promotes endothelial cell survival, migration and differentiation into network structures in an AKT-dependent manner. Also promotes survival of cardiac myocytes. Initiates various signaling cascades by activating different receptors on the cell surface such as DIP2A, TLR4 or BMP receptors. The chain is Follistatin-related protein 1 (Fstl1) from Rattus norvegicus (Rat).